The sequence spans 234 residues: Protein CIST1 (234 aa).

An N-terminal signal peptide occupies residues 1-24 (MACPQLPPLLLLVLVVLLKAGVNY). Topologically, residues 25–180 (NTPFTDIVTS…GPRELHRNPS (156 aa)) are extracellular. Positions 41 to 121 (SPVSSLISSP…THPSSGSPSA (81 aa)) are enriched in polar residues. A disordered region spans residues 41 to 174 (SPVSSLISSP…PAPGDTGPRE (134 aa)). Residues 122–140 (ELTPSSHSTLPSSESLTPH) show a composition bias toward low complexity. A compositionally biased stretch (polar residues) spans 141–159 (WSPTSHSPGTEPLTSTDQT). A helical membrane pass occupies residues 181–201 (VVVVVCLLVSLLLIGSVVMAV). Residues 202–234 (RFCHRNESKFENLDEVSMGSVNDRLSFAHHLQE) are Cytoplasmic-facing.

The protein resides in the membrane. In Homo sapiens (Human), this protein is Protein CIST1.